We begin with the raw amino-acid sequence, 292 residues long: D-alanyl-D-alanine endopeptidase (292 aa).

Residues 1–18 form the signal peptide; that stretch reads MFKKALFILSLCPSFALA. Catalysis depends on S45, which acts as the Acyl-ester intermediate. The Proton acceptor role is filled by K48. S102 is a catalytic residue. Residue K207 participates in substrate binding.

It belongs to the peptidase S11 family.

The protein resides in the periplasm. Its function is as follows. Cell wall formation. May play a specialized role in remodeling the cell wall. Specifically hydrolyzes the DD-diaminopimelate-alanine bonds in high-molecular-mass murein sacculi. This chain is D-alanyl-D-alanine endopeptidase (pbpG), found in Haemophilus influenzae (strain ATCC 51907 / DSM 11121 / KW20 / Rd).